A 201-amino-acid polypeptide reads, in one-letter code: FMN-dependent NADH:quinone oxidoreductase (201 aa).

Residues S10, 16 to 18, 96 to 99, and 140 to 143 each bind FMN; these read SQS, MYNF, and SRGG.

It belongs to the azoreductase type 1 family. Homodimer. FMN is required as a cofactor.

It catalyses the reaction 2 a quinone + NADH + H(+) = 2 a 1,4-benzosemiquinone + NAD(+). It carries out the reaction N,N-dimethyl-1,4-phenylenediamine + anthranilate + 2 NAD(+) = 2-(4-dimethylaminophenyl)diazenylbenzoate + 2 NADH + 2 H(+). Its function is as follows. Quinone reductase that provides resistance to thiol-specific stress caused by electrophilic quinones. Also exhibits azoreductase activity. Catalyzes the reductive cleavage of the azo bond in aromatic azo compounds to the corresponding amines. This chain is FMN-dependent NADH:quinone oxidoreductase, found in Salmonella choleraesuis (strain SC-B67).